Consider the following 88-residue polypeptide: UPF0367 protein syc2447_c (88 aa).

It belongs to the UPF0367 family.

The protein is UPF0367 protein syc2447_c of Synechococcus sp. (strain ATCC 27144 / PCC 6301 / SAUG 1402/1) (Anacystis nidulans).